Here is a 339-residue protein sequence, read N- to C-terminus: Serine/threonine-protein kinase SAPK2 (339 aa).

The 257-residue stretch at 4 to 260 (YEVIKDIGSG…IPEIKNHPWF (257 aa)) folds into the Protein kinase domain. ATP-binding positions include 10–18 (IGSGNFGVA) and Lys-33. Catalysis depends on Asp-123, which acts as the Proton acceptor. Residues 253–339 (EIKNHPWFLK…EDSGDFVCAL (87 aa)) form a C-terminal region.

This sequence belongs to the protein kinase superfamily. Ser/Thr protein kinase family. As to quaternary structure, interacts with BZIP46. Interacts with ABI5 and PP2C30. Interacts with PP2C51. Post-translationally, phosphorylated. As to expression, expressed in leaf blades, leaf sheaths and roots. Expressed in shoots and roots of young seedlings.

The protein resides in the cytoplasm. It is found in the nucleus. It catalyses the reaction L-seryl-[protein] + ATP = O-phospho-L-seryl-[protein] + ADP + H(+). The catalysed reaction is L-threonyl-[protein] + ATP = O-phospho-L-threonyl-[protein] + ADP + H(+). With respect to regulation, activated by phosphorylation in response to hyperosmotic stress within 5 minutes. Functionally, may play a role in signal transduction of hyperosmotic response. Can phosphorylate BZIP46 in vitro. Together with ABI5, PP2C30 and PYL5, is part of an abscisic acid (ABA) signaling unit that modulates seed germination and early seedling growth. This Oryza sativa subsp. japonica (Rice) protein is Serine/threonine-protein kinase SAPK2 (SAPK2).